The sequence spans 123 residues: WAP four-disulfide core domain protein 5 (123 aa).

A signal peptide spans 1-24 (MRIQSLLLLGALLAVGSQLPAVFG). 2 consecutive WAP domains span residues 27–73 (KGEK…CVPR) and 74–121 (VSVK…RDPA). Intrachain disulfides connect C34–C62, C41–C66, C49–C61, C55–C70, C81–C109, C88–C113, C96–C108, and C102–C117.

It localises to the secreted. Functionally, putative acid-stable proteinase inhibitor. The polypeptide is WAP four-disulfide core domain protein 5 (WFDC5) (Pongo abelii (Sumatran orangutan)).